The following is a 348-amino-acid chain: Protein lifeguard 1 (348 aa).

Residues 1-118 (MSHEKSFLVS…GNYQEEGPPS (118 aa)) form a disordered region. Residues 14–41 (YPPPNPGYPVGPQAPMPPYVQPPYPGAP) show a composition bias toward pro residues. Residues 42–57 (YPQAAFQPSPYGQPGY) are compositionally biased toward low complexity. Positions 82-101 (GPYPQSPFPPNPYGQPPPFQ) are enriched in pro residues. Transmembrane regions (helical) follow at residues 142 to 162 (VFLVLTLQLSVTLSTVAIFTF), 174 to 194 (VWTYYVSYAIFFISLIVLSCC), 205 to 225 (LVALSILTISLSYMVGMIASF), 230 to 250 (AVIMAVGITTAVCFTVVIFSM), 260 to 280 (MGVLLVSVVVLFIFAILCIFI), 284 to 304 (ILEIVYASLGALLFTCFLAVD), and 323 to 343 (FAALNLYTDIINIFLYILTII).

The protein belongs to the BI1 family. LFG subfamily.

It localises to the membrane. Potential apoptotic regulator. This chain is Protein lifeguard 1 (Grina), found in Rattus norvegicus (Rat).